Consider the following 1394-residue polypeptide: MVDNYHSSLDVAKTPIQSDADAQKSEAETEGPSSKSSQIAAGESIADSVRNFLELRQGGIPDDTGVVFDKISAVGSGTGSQDAPTVTSAAQSAFGLLSPLQNRQRKQYSRPILSGFSGTINPGEMLLVLGKPGSGCTTFLKTLSGLWDEYKEIQGELTLGGHPLLDVMKQRPQDILFCAESDDHFPTLTVAETLRFATRARCGPQVSAREIDTMVTQLAKLVGLGNVLNTKVGDAKIRGVSGGERRRVSLAEALATCARLICLDNPTHGLDSSTAVEFMEMMREWTTQSRCVAAMSVYQASDAIVSYFDKVLIINSGRQIYYGPVRDAKAYFEDLGFECLSTTTVADFLNVMSADPDVRRAQENRENQVPRTAEEFERAFSASPIYQEMQKSVQVAKERFQTNPSPLVKTSAFALPIWHQIWYCAGRQFRIVTSDYSLWAVELATIVVQSLVLGTLFRNQQRTTSSLFIFASALFYSVLVPALQSMAEFGNGFAQRPLILKQKRYQISRPIAYALGLVTTDVVWKVAAICYNIPLYFLTGFQRTAGNFFTWFLIIYLEHLALSMFFRSVAIFSPNMHRAVLPVGIFFNMYVLYTGLYVPAPQMQVWLGWLRYLNPLYYAFESVMVNEFRDLSYQCSASDPVPSGLGYNDMAHQVCAVVGSEPGDRLLSGASYIHAQYGFKTSHLWRNVGINAALFVFFALCSGIGMEMLKTPAGQLATVFYKSSPGVTHRRDKIDSETGQDQGNESSEMSAGQSNDALRLQEHQGPDKSHNLAWTNLCLDIKTKEGDQRLLNNLSGSVKSGQLKALMGVSGAGKTTLLNALAGRSTIGNLTGTLALNGQVLPTFFRSRMGYVQQQDIHLPTQTVREALQMTARLRRPESISVADKNAYVEKVIEWLSMEHIADALVGVPGAGLNLEQRKKVSIGVEMASKPEILFLDEPTSGLDGQSAMLIARLLRRLADSGQAILCTIHQPAAELIDQFDKLYLLSRGGNLVYDGSLGTRCHEAIQYFQPRSRPCGPEENPAEYFLAVIGAGSRNDAHMDWASLWNDSEQGKEREKAEESLVPAAEQAPQLEQQSLYSVPFHVQLWVVVQRTWLYYWREPDYVNSKLWMSVGNSLLNSLTHLQSPNTERGAYNRVFSAFMSLIVGPPLGLQVQPRFVTLRDIFVHRERESLTYHWLAFVLSAFIVELPFTFLSSLVYWLLWYFPVGYFNAPSRAGYSFLMYELFGVFATSLAQLCASLMPNIEAAFAANGFFFMFCNTFAGTLSPKPVTPSGWRWFYNISPLFYLGEGVTVDVLQDLPIRCEESEVSIFYAVNGTTCGQYAQDFLKTATGYLLNPASTTECQYCRYRDGQSYFQQYGYEFAHRHRNIGVFICFIAFNFTMVLVMTYLTKTRRH.

The interval 1 to 41 (MVDNYHSSLDVAKTPIQSDADAQKSEAETEGPSSKSSQIAA) is disordered. Residues 98 to 341 (SPLQNRQRKQ…FEDLGFECLS (244 aa)) enclose the ABC transporter 1 domain. 6 consecutive transmembrane segments (helical) span residues 437 to 457 (SLWA…GTLF), 467 to 487 (LFIF…QSMA), 511 to 531 (IAYA…AICY), 546 to 566 (GNFF…SMFF), 579 to 599 (AVLP…LYVP), and 688 to 708 (VGIN…GMEM). Positions 727 to 755 (VTHRRDKIDSETGQDQGNESSEMSAGQSN) are disordered. A compositionally biased stretch (polar residues) spans 737-755 (ETGQDQGNESSEMSAGQSN). Residues 767-1013 (DKSHNLAWTN…EAIQYFQPRS (247 aa)) enclose the ABC transporter 2 domain. Residue 808–815 (GVSGAGKT) participates in ATP binding. 6 consecutive transmembrane segments (helical) span residues 1131-1151 (GAYN…PLGL), 1177-1197 (LAFV…SSLV), 1219-1239 (FLMY…CASL), 1245-1265 (AAFA…GTLS), 1280-1300 (ISPL…DLPI), and 1368-1388 (IGVF…MTYL).

Belongs to the ABC transporter superfamily. ABCG family. PDR (TC 3.A.1.205) subfamily.

It localises to the vacuole membrane. Its subcellular location is the cell membrane. It participates in mycotoxin biosynthesis; patulin biosynthesis. In terms of biological role, ABC transporter; part of the gene cluster that mediates the biosynthesis of patulin, an acetate-derived tetraketide mycotoxin produced by several fungal species that shows antimicrobial properties against several bacteria. May be involved in the secretion of E-ascladiol to be converted to patulin by the secreted patulin synthase patE. The protein is ABC transporter patM of Penicillium expansum (Blue mold rot fungus).